A 222-amino-acid chain; its full sequence is Fibrillarin-like rRNA/tRNA 2'-O-methyltransferase (222 aa).

S-adenosyl-L-methionine contacts are provided by residues threonine 86–threonine 87, glutamate 104–valine 105, aspartate 129–alanine 130, and aspartate 149–glutamine 152.

It belongs to the methyltransferase superfamily. Fibrillarin family. Interacts with nop5. Component of box C/D small ribonucleoprotein (sRNP) particles that contain rpl7ae, FlpA and nop5, plus a guide RNA.

Functionally, involved in pre-rRNA and tRNA processing. Utilizes the methyl donor S-adenosyl-L-methionine to catalyze the site-specific 2'-hydroxyl methylation of ribose moieties in rRNA and tRNA. Site specificity is provided by a guide RNA that base pairs with the substrate. Methylation occurs at a characteristic distance from the sequence involved in base pairing with the guide RNA. This Thermoplasma volcanium (strain ATCC 51530 / DSM 4299 / JCM 9571 / NBRC 15438 / GSS1) protein is Fibrillarin-like rRNA/tRNA 2'-O-methyltransferase.